The chain runs to 1383 residues: PAS domain-containing serine/threonine-protein kinase (1383 aa).

Met1 carries the post-translational modification N-acetylmethionine. Ser19 is subject to Phosphoserine. The residue at position 31 (Thr31) is a Phosphothreonine. PAS domains lie at 117–188 (SGSL…VEAD) and 333–400 (YQAS…SVQL). The residue at position 1000 (Ser1000) is a Phosphoserine. The Protein kinase domain maps to 1059 to 1311 (YNTISPLGSG…LEKLIRDPWV (253 aa)). ATP contacts are provided by residues 1065 to 1073 (LGSGAFGFV), Lys1088, and 1142 to 1149 (EKHGSGMD). Residue Asp1188 is the Proton acceptor of the active site. Asp1206 contacts ATP. A phosphothreonine; by autocatalysis mark is found at Thr1221 and Thr1225. Positions 1344–1383 (GSRSPSEMAQREGLCGPPAPRETRGDQHCLHLKDPSLPVS) are disordered. Basic and acidic residues predominate over residues 1364–1377 (RETRGDQHCLHLKD).

The protein belongs to the protein kinase superfamily. CAMK Ser/Thr protein kinase family. In terms of processing, autophosphorylated on Thr-1221 and Thr-1225. Autophosphorylation is activated by phospholipids. In terms of tissue distribution, ubiquitously expressed. Strongly up-regulated in postmeiotic germ cells during spermatogenesis.

The protein localises to the cytoplasm. Its subcellular location is the nucleus. The catalysed reaction is L-seryl-[protein] + ATP = O-phospho-L-seryl-[protein] + ADP + H(+). The enzyme catalyses L-threonyl-[protein] + ATP = O-phospho-L-threonyl-[protein] + ADP + H(+). With respect to regulation, protein kinase activity is inhibited by the first PAS domain: binding of an unidentified ligand desinhibits the protein kinase activity. May be activated by autophosphorylation on Thr-1221 and Thr-1225. Autophosphorylation is enhanced upon phosphatidylinositol monophosphate (phosphatidylinositol 4-phosphate) binding and inhibited upon phosphatidylinositol bi- and tri-phosphate binding. In contrast, phosphorylation of target proteins is inhibited upon all phosphatidylinositol-binding (phosphatidylinositol mono- bi- and tri-phosphate). Functionally, serine/threonine-protein kinase involved in energy homeostasis and protein translation. Phosphorylates EEF1A1, GYS1, PDX1 and RPS6. Probably plays a role under changing environmental conditions (oxygen, glucose, nutrition), rather than under standard conditions. Acts as a sensor involved in energy homeostasis: regulates glycogen synthase synthesis by mediating phosphorylation of GYS1, leading to GYS1 inactivation. May be involved in glucose-stimulated insulin production in pancreas and regulation of glucagon secretion by glucose in alpha cells; however such data require additional evidences. May play a role in regulation of protein translation by phosphorylating EEF1A1, leading to increase translation efficiency. May also participate in respiratory regulation. This Mus musculus (Mouse) protein is PAS domain-containing serine/threonine-protein kinase (Pask).